Here is a 915-residue protein sequence, read N- to C-terminus: Metabotropic glutamate receptor 7 (915 aa).

The N-terminal stretch at 1-34 (MVQLGKLLRVLTLMKFPCCVLEVLLCVLAAAARG) is a signal peptide. Residues 35 to 590 (QEMYAPHSIR…IIKLEWHSPW (556 aa)) lie on the Extracellular side of the membrane. An intrachain disulfide couples Cys67 to Cys109. N-linked (GlcNAc...) asparagine glycosylation occurs at Asn98. Residues Ser159, 180–182 (AST), Tyr230, and Asp314 each bind L-glutamate. 7 cysteine pairs are disulfide-bonded: Cys249/Cys541, Cys374/Cys390, Cys430/Cys437, Cys523/Cys542, Cys527/Cys545, Cys548/Cys560, and Cys563/Cys576. Lys407 is a binding site for L-glutamate. N-linked (GlcNAc...) asparagine glycosylation is found at Asn458 and Asn486. Residue Asn572 is glycosylated (N-linked (GlcNAc...) asparagine). The helical transmembrane segment at 591–615 (AVIPVFLAMLGIIATIFVMATFIRY) threads the bilayer. Over 616-627 (NDTPIVRASGRE) the chain is Cytoplasmic. The helical transmembrane segment at 628-648 (LSYVLLTGIFLCYIITFLMIA) threads the bilayer. The Extracellular segment spans residues 649–654 (KPDVAV). A helical transmembrane segment spans residues 655–675 (CSFRRVFLGLGMCISYAALLT). The Cytoplasmic portion of the chain corresponds to 676-702 (KTNRIYRIFEQGKKSVTAPRLISPTSQ). A helical membrane pass occupies residues 703–723 (LAITSSLISVQLLGVFIWFGV). Over 724–753 (DPPNIIIDYDEHKTMNPEQARGVLKCDITD) the chain is Extracellular. Residues 754–775 (LQIICSLGYSILLMVTCTVYAI) traverse the membrane as a helical segment. Over 776–788 (KTRGVPENFNEAK) the chain is Cytoplasmic. A helical membrane pass occupies residues 789–810 (PIGFTMYTTCIVWLAFIPIFFG). The Extracellular segment spans residues 811-825 (TAQSAEKLYIQTTTL). The chain crosses the membrane as a helical span at residues 826–850 (TISMNLSASVALGMLYMPKVYIIIF). Residues 851-915 (HPELNVQKRK…KYVSYNNLVI (65 aa)) are Cytoplasmic-facing. A disordered region spans residues 874–895 (SRLSHKPSDRPNGEAKTELCEN). Residues 879 to 892 (KPSDRPNGEAKTEL) show a composition bias toward basic and acidic residues. Phosphoserine is present on Ser900.

This sequence belongs to the G-protein coupled receptor 3 family. As to quaternary structure, homodimer. Interacts with PICK1.

Its subcellular location is the cell membrane. Functionally, G-protein coupled receptor activated by glutamate that regulates axon outgrowth through the MAPK-cAMP-PKA signaling pathway during neuronal development. Ligand binding causes a conformation change that triggers signaling via guanine nucleotide-binding proteins (G proteins) and modulates the activity of downstream effectors, such as adenylate cyclase that it inhibits. This Mus musculus (Mouse) protein is Metabotropic glutamate receptor 7 (Grm7).